The primary structure comprises 73 residues: UPF0154 protein PEPE_0872 (73 aa).

The chain crosses the membrane as a helical span at residues 5 to 25 (IWIMIVIIALLVGAVGGFFFA).

The protein belongs to the UPF0154 family.

The protein localises to the cell membrane. The sequence is that of UPF0154 protein PEPE_0872 from Pediococcus pentosaceus (strain ATCC 25745 / CCUG 21536 / LMG 10740 / 183-1w).